The following is a 212-amino-acid chain: General odorant-binding protein 68 (212 aa).

An N-terminal signal peptide occupies residues 1–28 (MATTIARIGSANWAKLLVLLWLVQLATA). 3 disulfide bridges follow: Cys64/Cys85, Cys80/Cys152, and Cys130/Cys162.

This sequence belongs to the PBP/GOBP family.

The protein resides in the secreted. Its function is as follows. Present in the aqueous fluid surrounding olfactory sensory dendrites and are thought to aid in the capture and transport of hydrophobic odorants into and through this fluid. The chain is General odorant-binding protein 68 (Obp68) from Anopheles gambiae (African malaria mosquito).